Consider the following 1577-residue polypeptide: Hemolysin (1577 aa).

The first 29 residues, 1 to 29 (MKSKNFKLSPSGRLAASLAIIFVSLNAYG), serve as a signal peptide directing secretion. Residues 437 to 446 (EKESRSENGN) are compositionally biased toward basic and acidic residues. Disordered regions lie at residues 437-467 (EKES…QTET), 1081-1103 (TDTH…GTTP), 1169-1188 (QSAS…GVQA), and 1213-1232 (KQDE…SGNL). Composition is skewed to polar residues over residues 454–467 (LESG…QTET), 1081–1095 (TDTH…NGSA), and 1169–1184 (QSAS…NLSG).

Its subcellular location is the cell outer membrane. Its function is as follows. Bacterial hemolysins are exotoxins that attack blood cell membranes and cause cell rupture by mechanisms not clearly defined. In terms of biological role, cell-bound hemolysin, which releases heme-iron from erythrocytes by interaction with the erythrocyte membrane. HpmA requires HpmB function. This chain is Hemolysin (hpmA), found in Proteus mirabilis.